The primary structure comprises 153 residues: Small ribosomal subunit protein uS5 (153 aa).

The 64-residue stretch at 15-78 (FQEVVVNVGR…DDAFKNLIHV (64 aa)) folds into the S5 DRBM domain.

This sequence belongs to the universal ribosomal protein uS5 family. Part of the 30S ribosomal subunit. Contacts proteins S4 and S8.

With S4 and S12 plays an important role in translational accuracy. Its function is as follows. Located at the back of the 30S subunit body where it stabilizes the conformation of the head with respect to the body. In Helicobacter acinonychis (strain Sheeba), this protein is Small ribosomal subunit protein uS5.